We begin with the raw amino-acid sequence, 930 residues long: Protein ARABIDILLO 1 (930 aa).

The Nuclear localization signal motif lies at 3 to 8 (RRVRRK). One can recognise an F-box domain in the interval 44 to 90 (FVDWISLPYDTVLQLFTCLNYRDRASLASTCKTWRCLGASSCLWTSL). 13 ARM repeats span residues 172-212 (RITS…KHCP), 244-285 (TSNI…TSSQ), 379-418 (PEGL…TFVV), 428-467 (CGRA…NLSV), 469-508 (ANIA…NLSV), 510-552 (EEHK…NLAA), 554-594 (DKCS…NLAA), 600-639 (NNNA…NLSF), 641-683 (DKNR…GLSV), 685-724 (EANS…NLAF), 726-766 (PGNA…YMFD), 790-831 (LDGA…QVTE), and 835-875 (IQEA…QFTI).

Belongs to the beta-catenin family. Interacts with SNL1. Interacts with MYB53, MYB92 and MYB93. As to expression, expressed ubiquitously, with higher levels in root tip, pericycle and vasculature.

The protein localises to the nucleus. In terms of biological role, promotes lateral root initiation and development, independently of auxin (IAA) and abscisis acid (ABA). The chain is Protein ARABIDILLO 1 (FBX5) from Arabidopsis thaliana (Mouse-ear cress).